Here is a 264-residue protein sequence, read N- to C-terminus: S-adenosylmethionine decarboxylase proenzyme (264 aa).

Catalysis depends on serine 112, which acts as the Schiff-base intermediate with substrate; via pyruvic acid. Serine 112 carries the pyruvic acid (Ser); by autocatalysis modification. Histidine 117 serves as the catalytic Proton acceptor; for processing activity. Catalysis depends on cysteine 140, which acts as the Proton donor; for catalytic activity.

This sequence belongs to the prokaryotic AdoMetDC family. Type 2 subfamily. Heterooctamer of four alpha and four beta chains arranged as a tetramer of alpha/beta heterodimers. It depends on pyruvate as a cofactor. Post-translationally, is synthesized initially as an inactive proenzyme. Formation of the active enzyme involves a self-maturation process in which the active site pyruvoyl group is generated from an internal serine residue via an autocatalytic post-translational modification. Two non-identical subunits are generated from the proenzyme in this reaction, and the pyruvate is formed at the N-terminus of the alpha chain, which is derived from the carboxyl end of the proenzyme. The post-translation cleavage follows an unusual pathway, termed non-hydrolytic serinolysis, in which the side chain hydroxyl group of the serine supplies its oxygen atom to form the C-terminus of the beta chain, while the remainder of the serine residue undergoes an oxidative deamination to produce ammonia and the pyruvoyl group blocking the N-terminus of the alpha chain.

It carries out the reaction S-adenosyl-L-methionine + H(+) = S-adenosyl 3-(methylsulfanyl)propylamine + CO2. The protein operates within amine and polyamine biosynthesis; S-adenosylmethioninamine biosynthesis; S-adenosylmethioninamine from S-adenosyl-L-methionine: step 1/1. Its function is as follows. Catalyzes the decarboxylation of S-adenosylmethionine to S-adenosylmethioninamine (dcAdoMet), the propylamine donor required for the synthesis of the polyamines spermine and spermidine from the diamine putrescine. The polypeptide is S-adenosylmethionine decarboxylase proenzyme (Enterobacter sp. (strain 638)).